The sequence spans 236 residues: 15,16-dihydrobiliverdin:ferredoxin oxidoreductase (236 aa).

This sequence belongs to the HY2 family.

The enzyme catalyses 15,16-dihydrobiliverdin + oxidized 2[4Fe-4S]-[ferredoxin] = biliverdin IXalpha + reduced 2[4Fe-4S]-[ferredoxin] + 2 H(+). Catalyzes the two-electron reduction of biliverdin IX-alpha at the C15 methine bridge. This Prochlorococcus marinus (strain MIT 9215) protein is 15,16-dihydrobiliverdin:ferredoxin oxidoreductase.